The primary structure comprises 180 residues: uncharacterized protein (180 aa).

A run of 6 helical transmembrane segments spans residues 4–24 (KSNIKLILATDLLAVLILSLF), 25–45 (IKNFKMVLAFLLAVFVIWLFI), 57–77 (NLLAMSVGFIEGILIFLGIIY), 81–101 (FLDITLGIFAILILIVMGILF), 124–144 (FLTLISIFGMLLTIYVFLLIL), and 156–176 (IIRTIMLVITANMFIIEFYTF).

Its subcellular location is the cell membrane. This is an uncharacterized protein from Methanocaldococcus jannaschii (strain ATCC 43067 / DSM 2661 / JAL-1 / JCM 10045 / NBRC 100440) (Methanococcus jannaschii).